A 390-amino-acid polypeptide reads, in one-letter code: Pyruvate dehydrogenase E1 component subunit alpha, somatic form, mitochondrial (390 aa).

The transit peptide at 1-29 (MRKMLAAVSRVLSGASQKPASRVLVASRN) directs the protein to the mitochondrion. N6-acetyllysine; alternate is present on K63. Residue K63 is modified to N6-succinyllysine; alternate. H92, Y118, R119, A157, G165, V167, D196, G197, A198, N225, and Y227 together coordinate pyruvate. 2 residues coordinate thiamine diphosphate: Y118 and R119. Residues G165, V167, D196, G197, A198, and N225 each coordinate thiamine diphosphate. Position 196 (D196) interacts with Mg(2+). Mg(2+) contacts are provided by N225 and Y227. At S232 the chain carries Phosphoserine; by PDK1. Residue K244 is modified to N6-acetyllysine; alternate. An N6-succinyllysine; alternate modification is found at K244. An N6-succinyllysine modification is found at K277. H292 provides a ligand contact to thiamine diphosphate. Phosphoserine; by PDK1, PDK2, PDK3 and PDK4 is present on S293. The residue at position 295 (S295) is a Phosphoserine. S300 bears the Phosphoserine; by PDK1, PDK2, PDK3 and PDK4 mark. Y301 is subject to Phosphotyrosine. K313 carries the post-translational modification N6-acetyllysine; alternate. Residue K313 is modified to N6-succinyllysine; alternate. Residues K321 and K336 each carry the N6-acetyllysine modification. The residue at position 385 (K385) is an N6-succinyllysine.

Heterotetramer of two PDHA1 and two PDHB subunits. The heterotetramer interacts with DLAT, and is part of the multimeric pyruvate dehydrogenase complex that contains multiple copies of pyruvate dehydrogenase (E1), dihydrolipoamide acetyltransferase (DLAT, E2) and lipoamide dehydrogenase (DLD, E3). These subunits are bound to an inner core composed of about 48 DLAT and 12 PDHX molecules. The cofactor is thiamine diphosphate. Mg(2+) serves as cofactor. Phosphorylation at Ser-232, Ser-293 and Ser-300 by PDK family kinases inactivates the enzyme; for this phosphorylation at a single site is sufficient. Phosphorylation at Ser-293 interferes with access to active site, and thereby inactivates the enzyme. Dephosphorylation at all three sites, i.e. at Ser-232, Ser-293 and Ser-300, is required for reactivation. In terms of processing, acetylation alters the phosphorylation pattern. Deacetylated by SIRT3.

Its subcellular location is the mitochondrion matrix. It catalyses the reaction N(6)-[(R)-lipoyl]-L-lysyl-[protein] + pyruvate + H(+) = N(6)-[(R)-S(8)-acetyldihydrolipoyl]-L-lysyl-[protein] + CO2. Its activity is regulated as follows. Pyruvate dehydrogenase activity is inhibited by phosphorylation of PDHA1; it is reactivated by dephosphorylation. In terms of biological role, the pyruvate dehydrogenase complex catalyzes the overall conversion of pyruvate to acetyl-CoA and CO(2), and thereby links the glycolytic pathway to the tricarboxylic cycle. In Pan troglodytes (Chimpanzee), this protein is Pyruvate dehydrogenase E1 component subunit alpha, somatic form, mitochondrial (PDHA1).